The primary structure comprises 164 residues: UPF0225 protein Shewana3_2159 (164 aa).

This sequence belongs to the UPF0225 family.

The sequence is that of UPF0225 protein Shewana3_2159 from Shewanella sp. (strain ANA-3).